The sequence spans 363 residues: Pyrimidine monooxygenase RutA (363 aa).

Residues 49-50 (IK), Asn-115, Glu-124, 140-141 (RY), and Ser-190 contribute to the FMN site.

The protein belongs to the NtaA/SnaA/DszA monooxygenase family. RutA subfamily.

It carries out the reaction uracil + FMNH2 + NADH + O2 = (Z)-3-ureidoacrylate + FMN + NAD(+) + H2O + H(+). The enzyme catalyses thymine + FMNH2 + NADH + O2 = (Z)-2-methylureidoacrylate + FMN + NAD(+) + H2O + H(+). Catalyzes the pyrimidine ring opening between N-3 and C-4 by an unusual flavin hydroperoxide-catalyzed mechanism, adding oxygen atoms in the process to yield ureidoacrylate peracid, that immediately reacts with FMN forming ureidoacrylate and FMN-N(5)-oxide. The FMN-N(5)-oxide reacts spontaneously with NADH to produce FMN. Requires the flavin reductase RutF to regenerate FMN in vivo. The protein is Pyrimidine monooxygenase RutA of Pantoea ananatis (strain LMG 20103).